We begin with the raw amino-acid sequence, 79 residues long: MAKATKPADLRAKTAEELEALLIDLKREQFNLRFQRATGQNEGQARVRTVRREIARVKTIASQALKKNAVGAGAPAAKS.

Belongs to the universal ribosomal protein uL29 family.

In Gluconacetobacter diazotrophicus (strain ATCC 49037 / DSM 5601 / CCUG 37298 / CIP 103539 / LMG 7603 / PAl5), this protein is Large ribosomal subunit protein uL29.